The sequence spans 342 residues: CD2 antigen cytoplasmic tail-binding protein 2 (342 aa).

Residues 1–64 (MPKRKVTFQG…DEEGSSKYDI (64 aa)) are disordered. Residue K26 forms a Glycyl lysine isopeptide (Lys-Gly) (interchain with G-Cter in SUMO2) linkage. K44 bears the N6-acetyllysine mark. S46, S49, and S117 each carry phosphoserine. Disordered regions lie at residues 130–150 (RPPD…GQTP) and 177–200 (LGAR…PQRL). Residue S196 is modified to Phosphoserine. The region spanning 281–339 (DVMWEYKWENTGDAELYGPFTSAQMQTWVSEGYFPDGVYCRKLDPPGGQFYNSKRIDFE) is the GYF domain.

As to quaternary structure, component of the U5 snRNP complex composed of the U5 snRNA and at least PRPF6, PRPF8, SNRNP200, EFTUD2, SNRNP40, DDX23, TXNL4A and CD2BP2. Interacts directly with TXNL4A and PRPF6. Interacts (via GYF domain) with CD2 (via Pro-rich sequence in the cytoplasmic domain). Interacts with PQBP1.

Its subcellular location is the cytoplasm. It localises to the nucleus. Functionally, involved in pre-mRNA splicing as component of the U5 snRNP complex that is involved in spliceosome assembly. This chain is CD2 antigen cytoplasmic tail-binding protein 2 (Cd2bp2), found in Mus musculus (Mouse).